A 488-amino-acid polypeptide reads, in one-letter code: 3-octaprenyl-4-hydroxybenzoate carboxy-lyase (488 aa).

N172 is a binding site for Mn(2+). Residues 175–177 (IYR), 189–191 (RWL), and 194–195 (RG) contribute to the prenylated FMN site. Residue E238 participates in Mn(2+) binding. Residue D287 is the Proton donor of the active site.

It belongs to the UbiD family. As to quaternary structure, homohexamer. Prenylated FMN is required as a cofactor. The cofactor is Mn(2+).

It localises to the cell membrane. The catalysed reaction is a 4-hydroxy-3-(all-trans-polyprenyl)benzoate + H(+) = a 2-(all-trans-polyprenyl)phenol + CO2. It functions in the pathway cofactor biosynthesis; ubiquinone biosynthesis. Its function is as follows. Catalyzes the decarboxylation of 3-octaprenyl-4-hydroxy benzoate to 2-octaprenylphenol, an intermediate step in ubiquinone biosynthesis. The polypeptide is 3-octaprenyl-4-hydroxybenzoate carboxy-lyase (Hahella chejuensis (strain KCTC 2396)).